A 201-amino-acid polypeptide reads, in one-letter code: Ras-related protein Ral-a (201 aa).

18–25 (GSGGVGKS) is a GTP binding site. An Effector region motif is present at residues 40-48 (YEPTKADSY). Residues 65-69 (DTAGQ) and 124-127 (NKCD) contribute to the GTP site. The residue at position 198 (cysteine 198) is a Cysteine methyl ester. A lipid anchor (S-geranylgeranyl cysteine) is attached at cysteine 198. Positions 199–201 (TLL) are cleaved as a propeptide — removed in mature form.

It belongs to the small GTPase superfamily. Ras family.

The protein localises to the cell membrane. The protein resides in the cleavage furrow. It localises to the midbody. It is found in the midbody ring. The catalysed reaction is GTP + H2O = GDP + phosphate + H(+). This Drosophila melanogaster (Fruit fly) protein is Ras-related protein Ral-a (Rala).